We begin with the raw amino-acid sequence, 1196 residues long: Major DNA-binding protein (1196 aa).

A zinc finger spans residues 499 to 512 (CNLCTFDTRHACVH). Short sequence motifs (required for filament formation) lie at residues 843–844 (FW) and 1142–1144 (FNF). A disordered region spans residues 1158-1196 (GGPGAPGPAFAGRKRAFHGDDPFGEGPPDKKGDLTLDML). The segment at 1170–1196 (RKRAFHGDDPFGEGPPDKKGDLTLDML) is required for nuclear localization. Positions 1174-1196 (FHGDDPFGEGPPDKKGDLTLDML) are enriched in basic and acidic residues.

Belongs to the herpesviridae major DNA-binding protein family. As to quaternary structure, homooligomers. Forms double-helical filaments necessary for the formation of replication compartments within the host nucleus. Interacts with the origin-binding protein. Interacts with the helicase primase complex; this interaction stimulates primer synthesis activity of the helicase-primase complex. Interacts with the DNA polymerase. Interacts with the alkaline exonuclease; this interaction increases its nuclease processivity. Interacts with ICP27; this interaction plays a role in the stimulation of late gene transcription.

The protein resides in the host nucleus. In terms of biological role, plays several crucial roles in viral infection. Participates in the opening of the viral DNA origin to initiate replication by interacting with the origin-binding protein. May disrupt loops, hairpins and other secondary structures present on ssDNA to reduce and eliminate pausing of viral DNA polymerase at specific sites during elongation. Promotes viral DNA recombination by performing strand-transfer, characterized by the ability to transfer a DNA strand from a linear duplex to a complementary single-stranded DNA circle. Can also catalyze the renaturation of complementary single strands. Additionally, reorganizes the host cell nucleus, leading to the formation of prereplicative sites and replication compartments. This process is driven by the protein which can form double-helical filaments in the absence of DNA. This chain is Major DNA-binding protein, found in Homo sapiens (Human).